A 113-amino-acid polypeptide reads, in one-letter code: Putative pterin-4-alpha-carbinolamine dehydratase (113 aa).

It belongs to the pterin-4-alpha-carbinolamine dehydratase family.

The catalysed reaction is (4aS,6R)-4a-hydroxy-L-erythro-5,6,7,8-tetrahydrobiopterin = (6R)-L-erythro-6,7-dihydrobiopterin + H2O. The sequence is that of Putative pterin-4-alpha-carbinolamine dehydratase from Hydrogenovibrio crunogenus (strain DSM 25203 / XCL-2) (Thiomicrospira crunogena).